A 205-amino-acid polypeptide reads, in one-letter code: Probable GTP-binding protein EngB (205 aa).

Residues 27-201 (SGIEIAFAGR…AAKLDSWFAP (175 aa)) enclose the EngB-type G domain. GTP-binding positions include 35-42 (GRSNAGKS), 62-66 (GRTQL), 80-83 (DLPG), 147-150 (TKAD), and 180-182 (FSA). Residues Ser-42 and Thr-64 each contribute to the Mg(2+) site.

This sequence belongs to the TRAFAC class TrmE-Era-EngA-EngB-Septin-like GTPase superfamily. EngB GTPase family. Mg(2+) serves as cofactor.

Functionally, necessary for normal cell division and for the maintenance of normal septation. This is Probable GTP-binding protein EngB from Pasteurella multocida (strain Pm70).